We begin with the raw amino-acid sequence, 126 residues long: MRPEYRNKKIEAYIRELIAQAIQKIKEPEFEYLKDYIVISRVLISKDRRFADVFVSVIGNSEQRKKAVELLEKYKGYFRTFVAKNVRLYTAPELRFKEDKGIEESVRINKLLDEIMSKEDENGSDN.

The protein belongs to the RbfA family. Monomer. Binds 30S ribosomal subunits, but not 50S ribosomal subunits or 70S ribosomes.

It is found in the cytoplasm. One of several proteins that assist in the late maturation steps of the functional core of the 30S ribosomal subunit. Associates with free 30S ribosomal subunits (but not with 30S subunits that are part of 70S ribosomes or polysomes). Required for efficient processing of 16S rRNA. May interact with the 5'-terminal helix region of 16S rRNA. The polypeptide is Ribosome-binding factor A (Thermosipho africanus (strain TCF52B)).